The following is a 161-amino-acid chain: Large ribosomal subunit protein bL17 (161 aa).

Residues 126-161 form a disordered region; that stretch reads KVAKKATRTRRSKKTTEAAPAAEVPATEEPKAESAE. Over residues 129-138 the composition is skewed to basic residues; that stretch reads KKATRTRRSK. Residues 142–152 show a composition bias toward low complexity; that stretch reads EAAPAAEVPAT.

The protein belongs to the bacterial ribosomal protein bL17 family. Part of the 50S ribosomal subunit. Contacts protein L32.

The sequence is that of Large ribosomal subunit protein bL17 from Bacteroides fragilis (strain ATCC 25285 / DSM 2151 / CCUG 4856 / JCM 11019 / LMG 10263 / NCTC 9343 / Onslow / VPI 2553 / EN-2).